The primary structure comprises 757 residues: Mitofusin-2 (757 aa).

Residues Met1 to Val604 are Cytoplasmic-facing. Positions Lys30 to Arg94 are part of a helix bundle domain, formed by helices from N-terminal and C-terminal regions. A Dynamin-type G domain is found at Ala93–Glu342. The G1 motif stretch occupies residues Gly103 to Ser110. Ser106–Thr111 provides a ligand contact to GTP. Residue Thr111 is modified to Phosphothreonine; by PINK1. The interval Thr129–Thr130 is G2 motif. The G3 motif stretch occupies residues Asp199 to Gly202. Asn258 to Asp261 contributes to the GTP binding site. Residues Asn258–Asp261 are G4 motif. Position 288 (Glu288) is a region of interest, G5 motif. The GTP site is built by Ser305 and Lys307. Residues Glu359–Glu385 form a part of a helix bundle domain, formed by helices from N-terminal and C-terminal regions region. Positions Glu391–Met434 form a coiled coil. The residue at position 442 (Ser442) is a Phosphoserine; by PINK1. The chain crosses the membrane as a helical span at residues Thr605–Val625. A topological domain (mitochondrial intermembrane) is located at residue Trp626. A helical transmembrane segment spans residues Lys627–Tyr647. The Cytoplasmic portion of the chain corresponds to Glu648–Arg757. Residues Thr695–Ala738 are a coiled coil. The interval Glu722–Leu753 is part of a helix bundle domain, formed by helices from N-terminal and C-terminal regions.

Belongs to the TRAFAC class dynamin-like GTPase superfamily. Dynamin/Fzo/YdjA family. Mitofusin subfamily. In terms of assembly, forms homomultimers and heteromultimers with MFN1. Oligomerization is essential for mitochondrion fusion. Interacts with VAT1. Interacts with STOML2; may form heterooligomers. Interacts (phosphorylated) with PRKN. Interacts with EIF2AK3. Interacts with THG1L; THG1L probably functions as a guanyl-nucleotide exchange factor/GEF, activating MFN2. In terms of processing, phosphorylated by PINK1. Ubiquitinated by non-degradative ubiquitin by PRKN, promoting mitochondrial fusion; deubiquitination by USP30 inhibits mitochondrial fusion. Ubiquitinated by HUWE1 when dietary stearate (C18:0) levels are low; ubiquitination inhibits mitochondrial fusion. As to expression, ubiquitous; expressed at low level. Highly expressed in heart and kidney.

It is found in the mitochondrion outer membrane. The catalysed reaction is GTP + H2O = GDP + phosphate + H(+). Functionally, mitochondrial outer membrane GTPase that mediates mitochondrial clustering and fusion. Mitochondria are highly dynamic organelles, and their morphology is determined by the equilibrium between mitochondrial fusion and fission events. Overexpression induces the formation of mitochondrial networks. Membrane clustering requires GTPase activity and may involve a major rearrangement of the coiled coil domains. Plays a central role in mitochondrial metabolism and may be associated with obesity and/or apoptosis processes. Plays an important role in the regulation of vascular smooth muscle cell proliferation. Involved in the clearance of damaged mitochondria via selective autophagy (mitophagy). Is required for PRKN recruitment to dysfunctional mitochondria. Involved in the control of unfolded protein response (UPR) upon ER stress including activation of apoptosis and autophagy during ER stress. Acts as an upstream regulator of EIF2AK3 and suppresses EIF2AK3 activation under basal conditions. This Homo sapiens (Human) protein is Mitofusin-2.